The sequence spans 271 residues: Hydroxyethylthiazole kinase (271 aa).

Residue Met-46 participates in substrate binding. Positions 122 and 169 each coordinate ATP. Residue Gly-196 coordinates substrate.

Belongs to the Thz kinase family. Mg(2+) serves as cofactor.

It carries out the reaction 5-(2-hydroxyethyl)-4-methylthiazole + ATP = 4-methyl-5-(2-phosphooxyethyl)-thiazole + ADP + H(+). It participates in cofactor biosynthesis; thiamine diphosphate biosynthesis; 4-methyl-5-(2-phosphoethyl)-thiazole from 5-(2-hydroxyethyl)-4-methylthiazole: step 1/1. Its function is as follows. Catalyzes the phosphorylation of the hydroxyl group of 4-methyl-5-beta-hydroxyethylthiazole (THZ). This Alkaliphilus oremlandii (strain OhILAs) (Clostridium oremlandii (strain OhILAs)) protein is Hydroxyethylthiazole kinase.